The primary structure comprises 255 residues: uncharacterized protein (255 aa).

The signal sequence occupies residues 1-23 (MKRLNKLVLGIIFLFLVISITAG). Cys-24 carries N-palmitoyl cysteine lipidation. A lipid anchor (S-diacylglycerol cysteine) is attached at Cys-24.

The protein belongs to the staphylococcal tandem lipoprotein family.

It is found in the cell membrane. This is an uncharacterized protein from Staphylococcus aureus (strain USA300).